Consider the following 942-residue polypeptide: Zinc finger protein 865 (942 aa).

The interval 66–106 (FASTSTSKPKEFKVEAPPSSSLSPSKKPDIATTQQFNNQPP) is disordered. A compositionally biased stretch (polar residues) spans 96–106 (ATTQQFNNQPP). C2H2-type zinc fingers lie at residues 172 to 194 (FPCT…MLVH), 200 to 222 (YECN…RRCH), 282 to 304 (FTCT…QIIH), 310 to 332 (FSCS…VKTH), 338 to 360 (VQCE…QATH), 367 to 389 (YKCE…KQVH), 466 to 488 (FCCN…ERIH), 494 to 516 (HQCS…HVVH), 522 to 544 (YKCE…KQIH), 564 to 586 (FGCT…KELH), 592 to 614 (YVCD…KLVH), 678 to 700 (FSCS…KYVH), 706 to 728 (LACN…RRTH), 734 to 756 (FTCS…QRCH), 762 to 784 (YRCT…KVVH), 790 to 812 (YKCA…QRLH), 818 to 840 (QRCP…QRVH), 846 to 868 (YRCD…QRSH), 874 to 896 (LRCS…VQTH), and 902 to 924 (FKCG…RHAH).

The protein belongs to the krueppel C2H2-type zinc-finger protein family.

It localises to the nucleus. Functionally, may be involved in transcriptional regulation. This chain is Zinc finger protein 865 (znf865), found in Xenopus tropicalis (Western clawed frog).